Consider the following 158-residue polypeptide: Large ribosomal subunit protein uL13 (158 aa).

This sequence belongs to the universal ribosomal protein uL13 family. As to quaternary structure, part of the 50S ribosomal subunit.

Its function is as follows. This protein is one of the early assembly proteins of the 50S ribosomal subunit, although it is not seen to bind rRNA by itself. It is important during the early stages of 50S assembly. The protein is Large ribosomal subunit protein uL13 of Rickettsia canadensis (strain McKiel).